Consider the following 401-residue polypeptide: Tyrosine--tRNA ligase (401 aa).

Residues 41-50 (PSRPDLHLGH) carry the 'HIGH' region motif. The short motif at 225 to 229 (KMSKS) is the 'KMSKS' region element. Residue Lys-228 participates in ATP binding. Residues 334–395 (KNIVDLLVEI…GKRKFYRISG (62 aa)) enclose the S4 RNA-binding domain.

Belongs to the class-I aminoacyl-tRNA synthetase family. TyrS type 2 subfamily. As to quaternary structure, homodimer.

It localises to the cytoplasm. The enzyme catalyses tRNA(Tyr) + L-tyrosine + ATP = L-tyrosyl-tRNA(Tyr) + AMP + diphosphate + H(+). Functionally, catalyzes the attachment of tyrosine to tRNA(Tyr) in a two-step reaction: tyrosine is first activated by ATP to form Tyr-AMP and then transferred to the acceptor end of tRNA(Tyr). The protein is Tyrosine--tRNA ligase of Thermotoga maritima (strain ATCC 43589 / DSM 3109 / JCM 10099 / NBRC 100826 / MSB8).